Here is a 101-residue protein sequence, read N- to C-terminus: Large ribosomal subunit protein bL21 (101 aa).

This sequence belongs to the bacterial ribosomal protein bL21 family. Part of the 50S ribosomal subunit. Contacts protein L20.

In terms of biological role, this protein binds to 23S rRNA in the presence of protein L20. In Corynebacterium glutamicum (strain R), this protein is Large ribosomal subunit protein bL21.